A 210-amino-acid chain; its full sequence is MNHTKSSFIKLALECQVLKFGEFTLKSGRISPYFFNAGLFYHGDSLRKLGQFYAKTLLEQEVSFEHLFGPAYKGIPLATATAVALAELGRDITVTFNRKEVKTHGEGGQLIGSPLTGRTVIIDDVITAGTAFRESQTLIKENGGILRGVIIALDRCERGLTEKSTLSEIREQGIEVYSIINLFDLIEFLKNDNQYEQVQKLESYQERYGA.

Residue lysine 26 coordinates 5-phospho-alpha-D-ribose 1-diphosphate. 34-35 (FF) provides a ligand contact to orotate. 5-phospho-alpha-D-ribose 1-diphosphate-binding positions include 72–73 (YK), arginine 98, lysine 99, lysine 102, histidine 104, and 123–131 (DDVITAGTA). Orotate-binding residues include threonine 127 and arginine 155.

It belongs to the purine/pyrimidine phosphoribosyltransferase family. PyrE subfamily. In terms of assembly, homodimer. Requires Mg(2+) as cofactor.

The catalysed reaction is orotidine 5'-phosphate + diphosphate = orotate + 5-phospho-alpha-D-ribose 1-diphosphate. It functions in the pathway pyrimidine metabolism; UMP biosynthesis via de novo pathway; UMP from orotate: step 1/2. In terms of biological role, catalyzes the transfer of a ribosyl phosphate group from 5-phosphoribose 1-diphosphate to orotate, leading to the formation of orotidine monophosphate (OMP). In Legionella pneumophila (strain Paris), this protein is Orotate phosphoribosyltransferase.